We begin with the raw amino-acid sequence, 395 residues long: LL-diaminopimelate aminotransferase (395 aa).

Substrate contacts are provided by tyrosine 14 and glycine 41. Pyridoxal 5'-phosphate is bound by residues tyrosine 71, alanine 104–lysine 105, tyrosine 128, asparagine 174, tyrosine 205, and serine 233–serine 235. Substrate-binding residues include lysine 105, tyrosine 128, and asparagine 174. Lysine 236 bears the N6-(pyridoxal phosphate)lysine mark. Residues arginine 244 and asparagine 275 each coordinate pyridoxal 5'-phosphate. Substrate contacts are provided by asparagine 275 and arginine 368.

This sequence belongs to the class-I pyridoxal-phosphate-dependent aminotransferase family. LL-diaminopimelate aminotransferase subfamily. In terms of assembly, homodimer. Pyridoxal 5'-phosphate is required as a cofactor.

The enzyme catalyses (2S,6S)-2,6-diaminopimelate + 2-oxoglutarate = (S)-2,3,4,5-tetrahydrodipicolinate + L-glutamate + H2O + H(+). It functions in the pathway amino-acid biosynthesis; L-lysine biosynthesis via DAP pathway; LL-2,6-diaminopimelate from (S)-tetrahydrodipicolinate (aminotransferase route): step 1/1. Its function is as follows. Involved in the synthesis of meso-diaminopimelate (m-DAP or DL-DAP), required for both lysine and peptidoglycan biosynthesis. Catalyzes the direct conversion of tetrahydrodipicolinate to LL-diaminopimelate. The sequence is that of LL-diaminopimelate aminotransferase from Chlamydia caviae (strain ATCC VR-813 / DSM 19441 / 03DC25 / GPIC) (Chlamydophila caviae).